The sequence spans 295 residues: Glycine--tRNA ligase alpha subunit (295 aa).

Belongs to the class-II aminoacyl-tRNA synthetase family. In terms of assembly, tetramer of two alpha and two beta subunits.

It localises to the cytoplasm. It carries out the reaction tRNA(Gly) + glycine + ATP = glycyl-tRNA(Gly) + AMP + diphosphate. This chain is Glycine--tRNA ligase alpha subunit, found in Thermosynechococcus vestitus (strain NIES-2133 / IAM M-273 / BP-1).